Reading from the N-terminus, the 858-residue chain is Neural cell adhesion molecule 1 (858 aa).

Residues 1–19 (MLQTKDLIWTLFFLGTAVS) form the signal peptide. 5 Ig-like C2-type domains span residues 20 to 111 (LQVD…ATVN), 116 to 205 (QKLM…KDIQ), 212 to 301 (PTIQ…ATIH), 308 to 413 (PKIT…LEVQ), and 416 to 501 (PKLQ…ESLE). Topologically, residues 20-718 (LQVDIVPSQG…IPANGSPTSG (699 aa)) are extracellular. Cystine bridges form between Cys41-Cys96 and Cys139-Cys189. Asn222 carries an N-linked (GlcNAc...) asparagine glycan. A disulfide bond links Cys235 and Cys287. 5 N-linked (GlcNAc...) asparagine glycosylation sites follow: Asn315, Asn347, Asn433, Asn459, and Asn488. A disulfide bridge links Cys329 with Cys395. A disulfide bridge connects residues Cys436 and Cys489. Fibronectin type-III domains lie at 509-608 (TPSS…TQPV) and 611-706 (EPSA…SAQP). Pro706 carries the GPI-anchor amidated asparagine lipid modification. A helical transmembrane segment spans residues 719-739 (LSTGAIVGILIVIFVLLLVVV). The Cytoplasmic segment spans residues 740–858 (DITCYFLNKC…TQTKENESKA (119 aa)). A lipid anchor (GPI-anchor amidated asparagine) is attached at Ile741. The interval 766–858 (GAKGKDMEEG…TQTKENESKA (93 aa)) is disordered. Composition is skewed to basic and acidic residues over residues 768-809 (KGKD…HTEP) and 817-834 (EPEKGPVEAKPECQETET). Residues Ser780 and Ser784 each carry the phosphoserine modification.

In terms of assembly, (Microbial infection) Interacts with rabies virus glycoprotein. As to quaternary structure, (Microbial infection) Interacts with Zika virus envelope protein E. Interacts with MDK. Found in a complex with SLC39A6, SLC39A10 and with NCAM1; this complex controls NCAM1 phosphorylation and integration into focal adhesion complexes during epithelial-tomesenchymal transition. Interacts with synaptic plasticity regulator PANTS. Post-translationally, polysialylated at Asn-459 and Asn-488 by ST8SIA2 and ST8SIA4. Polysialylation modulates cell interactions by confering both attractive and repulsive properties that are highly regulated by ST8SIA2 and ST8SIA4. Polysialylation is formed on a-2,3-linked sialic acid of core glycans.

It is found in the cell membrane. Its subcellular location is the secreted. In terms of biological role, this protein is a cell adhesion molecule involved in neuron-neuron adhesion, neurite fasciculation, outgrowth of neurites, etc. (Microbial infection) Acts as a receptor for rabies virus. Functionally, (Microbial infection) Acts as a receptor for Zika virus. The chain is Neural cell adhesion molecule 1 from Homo sapiens (Human).